Here is a 310-residue protein sequence, read N- to C-terminus: tRNA dimethylallyltransferase (310 aa).

9–16 (GPTAVGKT) contributes to the ATP binding site. Residue 11-16 (TAVGKT) coordinates substrate. The interaction with substrate tRNA stretch occupies residues 34–37 (DSMQ).

It belongs to the IPP transferase family. In terms of assembly, monomer. It depends on Mg(2+) as a cofactor.

It carries out the reaction adenosine(37) in tRNA + dimethylallyl diphosphate = N(6)-dimethylallyladenosine(37) in tRNA + diphosphate. Its function is as follows. Catalyzes the transfer of a dimethylallyl group onto the adenine at position 37 in tRNAs that read codons beginning with uridine, leading to the formation of N6-(dimethylallyl)adenosine (i(6)A). The chain is tRNA dimethylallyltransferase from Syntrophomonas wolfei subsp. wolfei (strain DSM 2245B / Goettingen).